We begin with the raw amino-acid sequence, 443 residues long: MDEDCEVTQLQEQSCWATLPDVCLRRVFWWLGDRDRSRAALVCRKWNQIMYSADLWRYRTITFSGRPSRVHASEFESALWYIKKFGRYLEHLEIKFLNPYNAVLTKKFQVTMRGLLSCLGKSNNRLRSLSIQHLELDRLVWRNSIRGSLIKSLSFFLKKMGKHLDHLSLKGARLTVEQGCHILNSLSYMQNENMASELNIEDFFSHHLAVYGSSQFNKAMATFRNLTFLTLNYNCISDELLETLSENNAGTLRTMNIKCHVHDPHGQVVWGMSWAKLARQASNLKVNFFFERVMKYERLARILLQEIPVRSISLRSCYFSDPDWSMRPTLTDLLPTFRNTLQKLTFEFNNNHESLDEQLHLLILACRKLFYFKIWAFLDVKFVERILKSQEEGQCSLHTLKVRIYTNRYETNEEDRTLREIYRKYRKLIDSELNYFVVAYPMM.

Positions 13-59 constitute an F-box domain; that stretch reads QSCWATLPDVCLRRVFWWLGDRDRSRAALVCRKWNQIMYSADLWRYR.

As to quaternary structure, directly interacts with SKP1 and CUL1.

In terms of biological role, substrate-recognition component of the SCF (SKP1-CUL1-F-box protein)-type E3 ubiquitin ligase complex. This chain is F-box only protein 39 (Fbxo39), found in Mus musculus (Mouse).